Here is a 521-residue protein sequence, read N- to C-terminus: Spermidine transporter DUR31 (521 aa).

Residues 11-31 (AIIYLSYAFMLATGLFLAWKF) traverse the membrane as a helical segment. A glycan (N-linked (GlcNAc...) asparagine) is linked at asparagine 41. The next 12 membrane-spanning stretches (helical) occupy residues 47-67 (IPLA…TTYA), 79-99 (LVYT…GPVI), 117-137 (FGMV…FLFM), 156-176 (ALGA…FGGF), 187-207 (GVCV…YIEI), 227-247 (LVYI…GFWL), 264-284 (IAAF…FLAV), 310-330 (WLVA…FDSL), 354-374 (IMLI…ADNI), 377-397 (IYLI…LGLA), 406-426 (GFDV…FGTV), and 453-473 (FGAF…SAAL).

This sequence belongs to the sodium:solute symporter (SSF) (TC 2.A.21) family.

Its subcellular location is the membrane. The enzyme catalyses spermidine(in) = spermidine(out). Its function is as follows. Spermidine transporter that is also used by salivary gland-secreted histatin 5 (Hst 5) to enter into candidal cells. A major component of host nonimmune defense systems is salivary histatins, a family of small (3-4 kDa), histidine-rich, cationic proteins secreted by major salivary glands in humans and higher primates. Hst 5 is the most potent of the 12 histatin family members and has fungicidal activity against blastoconidial and filamentous forms of Candida albicans. DUR31 only functions under high concentrations of Hst 5. Hst 5 cojugates to spermidine to be uptaken by DUR31. This chain is Spermidine transporter DUR31, found in Candida albicans (strain SC5314 / ATCC MYA-2876) (Yeast).